Consider the following 245-residue polypeptide: Carboxy-S-adenosyl-L-methionine synthase (245 aa).

S-adenosyl-L-methionine contacts are provided by residues Tyr-39, 64-66 (GSS), 117-118 (DI), and Arg-199.

This sequence belongs to the class I-like SAM-binding methyltransferase superfamily. Cx-SAM synthase family. In terms of assembly, homodimer.

It carries out the reaction prephenate + S-adenosyl-L-methionine = carboxy-S-adenosyl-L-methionine + 3-phenylpyruvate + H2O. Its function is as follows. Catalyzes the conversion of S-adenosyl-L-methionine (SAM) to carboxy-S-adenosyl-L-methionine (Cx-SAM). In Desulfotalea psychrophila (strain LSv54 / DSM 12343), this protein is Carboxy-S-adenosyl-L-methionine synthase.